A 288-amino-acid polypeptide reads, in one-letter code: Protoheme IX farnesyltransferase 2 (288 aa).

A run of 8 helical transmembrane segments spans residues 16-36 (IGVF…GAVP), 38-58 (FAPV…AGAF), 88-108 (LWPL…AFAA), 111-131 (WAAL…TVWL), 139-159 (IVIG…VAVP), 166-186 (LILA…LATA), 227-247 (AFFG…GWFL), and 266-286 (FFAS…EPLL).

This sequence belongs to the UbiA prenyltransferase family. Protoheme IX farnesyltransferase subfamily.

The protein localises to the cell inner membrane. It carries out the reaction heme b + (2E,6E)-farnesyl diphosphate + H2O = Fe(II)-heme o + diphosphate. It functions in the pathway porphyrin-containing compound metabolism; heme O biosynthesis; heme O from protoheme: step 1/1. Its function is as follows. Converts heme B (protoheme IX) to heme O by substitution of the vinyl group on carbon 2 of heme B porphyrin ring with a hydroxyethyl farnesyl side group. In Paramagnetospirillum magneticum (strain ATCC 700264 / AMB-1) (Magnetospirillum magneticum), this protein is Protoheme IX farnesyltransferase 2.